The following is a 135-amino-acid chain: Transcription antitermination protein NusB (135 aa).

This sequence belongs to the NusB family.

Functionally, involved in transcription antitermination. Required for transcription of ribosomal RNA (rRNA) genes. Binds specifically to the boxA antiterminator sequence of the ribosomal RNA (rrn) operons. This Shewanella pealeana (strain ATCC 700345 / ANG-SQ1) protein is Transcription antitermination protein NusB.